Here is an 893-residue protein sequence, read N- to C-terminus: DNA mismatch repair protein MutS (893 aa).

Residues 1-17 are compositionally biased toward low complexity; that stretch reads MESTMSSASTNASPPSA. The disordered stretch occupies residues 1-22; that stretch reads MESTMSSASTNASPPSASEKHT. ATP is bound at residue 641-648; the sequence is GPNMGGKS.

It belongs to the DNA mismatch repair MutS family.

Functionally, this protein is involved in the repair of mismatches in DNA. It is possible that it carries out the mismatch recognition step. This protein has a weak ATPase activity. The protein is DNA mismatch repair protein MutS of Herminiimonas arsenicoxydans.